A 206-amino-acid polypeptide reads, in one-letter code: Cytidylate kinase (206 aa).

Residue 9-17 (GPAAAGKGT) coordinates ATP. Residues 155–168 (LRERDRRDREREAA) are compositionally biased toward basic and acidic residues. The segment at 155–174 (LRERDRRDREREAAPLRPAP) is disordered.

It belongs to the cytidylate kinase family. Type 1 subfamily.

The protein localises to the cytoplasm. The catalysed reaction is CMP + ATP = CDP + ADP. It catalyses the reaction dCMP + ATP = dCDP + ADP. The chain is Cytidylate kinase from Cereibacter sphaeroides (strain KD131 / KCTC 12085) (Rhodobacter sphaeroides).